The sequence spans 104 residues: Probable monothiol glutaredoxin 2 (104 aa).

A Glutaredoxin domain is found at 7-104; the sequence is FEFIENEIKN…NGELEKMLKG (98 aa). Position 24 (lysine 24) interacts with glutathione. Cysteine 32 lines the [2Fe-2S] cluster pocket. Glutathione contacts are provided by residues arginine 61, phenylalanine 73, and 86 to 87; that span reads CD.

Belongs to the glutaredoxin family. Monothiol subfamily.

The chain is Probable monothiol glutaredoxin 2 (grxC2) from Rickettsia felis (strain ATCC VR-1525 / URRWXCal2) (Rickettsia azadi).